Consider the following 394-residue polypeptide: Ribose-phosphate pyrophosphokinase 5, chloroplastic (394 aa).

The N-terminal 33 residues, 1–33 (MASIVQPSPTFPALNLRRSSLIRPPSSVRFPLK), are a transit peptide targeting the chloroplast. Residues aspartate 202, histidine 204, aspartate 213, and aspartate 217 each coordinate Mg(2+). The interval 288 to 303 (GKVAIMVDDMIDTAGT) is binding of phosphoribosylpyrophosphate.

This sequence belongs to the ribose-phosphate pyrophosphokinase family.

The protein localises to the plastid. The protein resides in the chloroplast. The catalysed reaction is D-ribose 5-phosphate + ATP = 5-phospho-alpha-D-ribose 1-diphosphate + AMP + H(+). In Arabidopsis thaliana (Mouse-ear cress), this protein is Ribose-phosphate pyrophosphokinase 5, chloroplastic (PRS5).